Here is a 240-residue protein sequence, read N- to C-terminus: Probable transcriptional regulatory protein Nmul_A2722 (240 aa).

Belongs to the TACO1 family.

Its subcellular location is the cytoplasm. This Nitrosospira multiformis (strain ATCC 25196 / NCIMB 11849 / C 71) protein is Probable transcriptional regulatory protein Nmul_A2722.